The chain runs to 450 residues: tRNA-2-methylthio-N(6)-dimethylallyladenosine synthase (450 aa).

An MTTase N-terminal domain is found at 3-119 (RRYYITTFGC…LGELLEQVWN (117 aa)). 6 residues coordinate [4Fe-4S] cluster: Cys12, Cys48, Cys82, Cys154, Cys158, and Cys161. Residues 140-377 (RDSTVTAWVN…NHLVAKIAGD (238 aa)) enclose the Radical SAM core domain. Positions 380-444 (QRYLGREEVV…AFSLSGVPLA (65 aa)) constitute a TRAM domain.

It belongs to the methylthiotransferase family. MiaB subfamily. As to quaternary structure, monomer. The cofactor is [4Fe-4S] cluster.

The protein resides in the cytoplasm. It carries out the reaction N(6)-dimethylallyladenosine(37) in tRNA + (sulfur carrier)-SH + AH2 + 2 S-adenosyl-L-methionine = 2-methylsulfanyl-N(6)-dimethylallyladenosine(37) in tRNA + (sulfur carrier)-H + 5'-deoxyadenosine + L-methionine + A + S-adenosyl-L-homocysteine + 2 H(+). Functionally, catalyzes the methylthiolation of N6-(dimethylallyl)adenosine (i(6)A), leading to the formation of 2-methylthio-N6-(dimethylallyl)adenosine (ms(2)i(6)A) at position 37 in tRNAs that read codons beginning with uridine. This chain is tRNA-2-methylthio-N(6)-dimethylallyladenosine synthase, found in Thermosynechococcus vestitus (strain NIES-2133 / IAM M-273 / BP-1).